The chain runs to 262 residues: Linker for activation of T-cells family member 1 (262 aa).

Over 1 to 4 (MEEA) the chain is Extracellular. Residues 5–27 (ILVPCVLGLLLLPILAMLMALCV) form a helical; Signal-anchor for type III membrane protein membrane-spanning segment. 2 S-palmitoyl cysteine lipidation sites follow: C26 and C29. Residues 28–262 (HCHRLPGSYD…PDYENLQELN (235 aa)) are Cytoplasmic-facing. The residue at position 39 (T39) is a Phosphothreonine. Phosphoserine occurs at positions 40, 41, 43, 84, 101, 106, and 109. Residues 69–115 (SYPPLSQPDLLPIPRSPQPLGGSHRTPSSRRDSDGANSVASYENEGA) are disordered. 5 positions are modified to phosphotyrosine: Y110, Y156, Y161, Y200, and Y220. Residues 161–164 (YLVV) are interaction with PLCG1. Interaction with GRB2, GRAP2 and PIK3R1 regions lie at residues 200 to 203 (YVNV) and 220 to 223 (YVNV). Positions 206–262 (SGESAEASLDGSREYVNVSQELHPGAAKTEPAALSSQEAEEVEEEGAPDYENLQELN) are disordered. 3 positions are modified to phosphoserine: S224, S240, and S241. Over residues 243–253 (EAEEVEEEGAP) the composition is skewed to acidic residues. A Phosphotyrosine modification is found at Y255.

In terms of assembly, when phosphorylated, interacts directly with the PIK3R1 subunit of phosphoinositide 3-kinase and the SH2 domains of GRB2, GRAP, GRAP2, PLCG1 and PLCG2. Interacts indirectly with CBL, SOS, VAV, and LCP2. Interacts with SHB, SKAP2 and CLNK. Interacts with FCGR1A. Interacts with GRB2, PLCG1 and THEMIS upon TCR activation in thymocytes. Interacts with THEMIS2. (Microbial infection) Interacts with herpes virus 1/HHV-1 protein US3; this interaction prevents the interaction between LAT and TRAF6. Phosphorylated on tyrosines by ZAP70 upon TCR activation, or by SYK upon other immunoreceptor activation; which leads to the recruitment of multiple signaling molecules. Is one of the most prominently tyrosine-phosphorylated proteins detected following TCR engagement. May be dephosphorylated by PTPRJ. Phosphorylated by ITK leading to the recruitment of VAV1 to LAT-containing complexes. In terms of processing, palmitoylation of Cys-26 and Cys-29 is required for raft targeting and efficient phosphorylation. Post-translationally, 'Lys-63'-linked ubiquitinated by TRAF6. As to expression, expressed in thymus, T-cells, NK cells, mast cells and, at lower levels, in spleen. Present in T-cells but not B-cells (at protein level).

Its subcellular location is the cell membrane. In terms of biological role, required for TCR (T-cell antigen receptor)- and pre-TCR-mediated signaling, both in mature T-cells and during their development. Involved in FCGR3 (low affinity immunoglobulin gamma Fc region receptor III)-mediated signaling in natural killer cells and FCER1 (high affinity immunoglobulin epsilon receptor)-mediated signaling in mast cells. Couples activation of these receptors and their associated kinases with distal intracellular events such as mobilization of intracellular calcium stores, PKC activation, MAPK activation or cytoskeletal reorganization through the recruitment of PLCG1, GRB2, GRAP2, and other signaling molecules. In Homo sapiens (Human), this protein is Linker for activation of T-cells family member 1 (LAT).